The chain runs to 430 residues: MGFQDQRSKEAFARANGVLPGGVNSPVRAFKSVGREPIFIAKGQGARLWDIDGNSYLDYVLSWGPLILGHAHPVVVGAIKAAAERGTSYGAPTEIETECAEEVIKAFPSMEMVRMVSSGTEATMSALRLARGVTGRNKIIKFEGCYHGHGDSLLIKAGSGALTFGVPTSPGVPSSVASQTIVAQYNDLEGLKEIFKECGEDIAAVILEPVTGNMGVVLPQPGFLAGLRTLTQDYGSLLIFDEVMTGFRVSYGGAQGRYQIDPDLTCLGKVIGGGLPVAAYGGKRKYMEQVAPSGPIYQAGTLSGNPLAMAAGLATLKLLQQEGVYEGLEKKTARLAEGLQSIAQELGFPIWVNSVGAMFSAFFTDQPVIDFKSACSSDVERFGSFFRGMLERGIYLAPSQYEAVFLSAAHTDADIDYTLEQARDVLKSLG.

The residue at position 269 (Lys269) is an N6-(pyridoxal phosphate)lysine.

The protein belongs to the class-III pyridoxal-phosphate-dependent aminotransferase family. HemL subfamily. Homodimer. Pyridoxal 5'-phosphate is required as a cofactor.

Its subcellular location is the cytoplasm. It catalyses the reaction (S)-4-amino-5-oxopentanoate = 5-aminolevulinate. The protein operates within porphyrin-containing compound metabolism; protoporphyrin-IX biosynthesis; 5-aminolevulinate from L-glutamyl-tRNA(Glu): step 2/2. This chain is Glutamate-1-semialdehyde 2,1-aminomutase, found in Desulfitobacterium hafniense (strain DSM 10664 / DCB-2).